A 601-amino-acid polypeptide reads, in one-letter code: MAGASELGTGPGAAGGDGDDSLYPIAVLIDELRNEDVQLRLNSIKKLSTIALALGVERTRSELLPFLTDTIYDEDEVLLALAEQLGNFTGLVGGPDFAHCLLPPLENLATVEETVVRDKAVESLRQISQEHTPVALEAYFVPLVKRLASGDWFTSRTSACGLFSVCYPRASNAVKAEIRQQFRSLCSDDTPMVRRAAASKLGEFAKVLELDSVKSEIVPLFTSLASDEQDSVRLLAVEACVSIAQLLSQDDLETLVMPTLRQAAEDKSWRVRYMVADRFSELQKAMGPKITLNDLIPAFQNLLKDCEAEVRAAAAHKVKELGENLPIEDRETIIMNQILPYIKELVSDTNQHVKSALASVIMGLSTILGKENTIEHLLPLFLAQLKDECPDVRLNIISNLDCVNEVIGIRQLSQSLLPAIVELAEDAKWRVRLAIIEYMPLLAGQLGVEFFDEKLNSLCMAWLVDHVYAIREAATNNLMKLVQKFGTEWAQNTIVPKVLVMANDPNYLHRMTTLFCINALSEACGQEITTKQMLPIVLKMAGDQVANVRFNVAKSLQKIGPILDTNALQGEVKPVLQKLGQDEDMDVKYFAQEAISVLALA.

An N-acetylalanine modification is found at Ala2. 15 HEAT repeats span residues 20–58, 59–96, 97–135, 136–173, 174–212, 213–251, 252–290, 291–333, 334–372, 373–411, 412–450, 451–489, 490–528, 529–567, and 568–601; these read DSLY…GVER, TRSE…GGPD, FAHC…TPVA, LEAY…ASNA, VKAE…ELDS, VKSE…SQDD, LETL…GPKI, TLND…RETI, IMNQ…GKEN, TIEH…GIRQ, LSQS…GVEF, FDEK…GTEW, AQNT…GQEI, TTKQ…DTNA, and LQGE…LALA.

Belongs to the phosphatase 2A regulatory subunit A family. PP2A consists of a common heterodimeric core enzyme, composed of a 36 kDa catalytic subunit (subunit C) and a 65 kDa constant regulatory subunit (PR65 or subunit A), that associates with a variety of regulatory subunits. Proteins that associate with the core dimer include three families of regulatory subunits B (the R2/B/PR55/B55, R3/B''/PR72/PR130/PR59 and R5/B'/B56 families), the 48 kDa variable regulatory subunit, viral proteins, and cell signaling molecules. Interacts with IPO9. Interacts with SGO1. Interacts with RAF1.

Functionally, the PR65 subunit of protein phosphatase 2A serves as a scaffolding molecule to coordinate the assembly of the catalytic subunit and a variable regulatory B subunit. This is Serine/threonine-protein phosphatase 2A 65 kDa regulatory subunit A beta isoform (PPP2R1B) from Homo sapiens (Human).